A 193-amino-acid chain; its full sequence is Ion-translocating oxidoreductase complex subunit A (193 aa).

6 helical membrane passes run leucine 5–leucine 25, phenylalanine 47–leucine 67, leucine 72–valine 92, leucine 102–leucine 122, alanine 134–isoleucine 154, and alanine 171–valine 191.

It belongs to the NqrDE/RnfAE family. In terms of assembly, the complex is composed of six subunits: RsxA, RsxB, RsxC, RsxD, RsxE and RsxG.

The protein resides in the cell inner membrane. Part of a membrane-bound complex that couples electron transfer with translocation of ions across the membrane. Required to maintain the reduced state of SoxR. This is Ion-translocating oxidoreductase complex subunit A from Salmonella agona (strain SL483).